A 325-amino-acid polypeptide reads, in one-letter code: Melanocortin receptor 5 (325 aa).

Over 1-37 the chain is Extracellular; sequence MNSSFHLHFLDLNLNATEGNLSGPNVKNKSSPCEDMG. N-linked (GlcNAc...) asparagine glycans are attached at residues Asn-2, Asn-15, Asn-20, and Asn-28. A helical transmembrane segment spans residues 38-61; the sequence is IAVEVFLTLGVISLLENILVIGAI. At 62 to 73 the chain is on the cytoplasmic side; sequence VKNKNLHSPMYF. The helical transmembrane segment at 74 to 97 threads the bilayer; sequence FVCSLAVADMLVSMSSAWETITIY. Residues 98 to 114 lie on the Extracellular side of the membrane; sequence LLNNKHLVIADAFVRHI. A helical membrane pass occupies residues 115–138; sequence DNVFDSMICISVVASMCSLLAIAV. Residues 139-155 lie on the Cytoplasmic side of the membrane; it reads DRYVTIFYALRYHHIMT. Residues 156-179 form a helical membrane-spanning segment; it reads ARRSGAIIAGIWAFCTGCGIVFIL. Topologically, residues 180–186 are extracellular; the sequence is YSESTYV. A helical transmembrane segment spans residues 187-211; sequence ILCLISMFFAMLFLLVSLYIHMFLL. Over 212 to 239 the chain is Cytoplasmic; that stretch reads ARTHVKRIAALPGASSARQRTSMQGAVT. Residues 240 to 265 form a helical membrane-spanning segment; it reads VTMLLGVFTVCWAPFFLHLTLMLSCP. At 266–273 the chain is on the extracellular side; the sequence is QNLYCSRF. A helical membrane pass occupies residues 274–297; the sequence is MSHFNMYLILIMCNSVMDPLIYAF. Residues 298–325 lie on the Cytoplasmic side of the membrane; that stretch reads RSQEMRKTFKEIICCRGFRIACSFPRRD. S-palmitoyl cysteine attachment occurs at residues Cys-311 and Cys-312.

It belongs to the G-protein coupled receptor 1 family. Expressed in the brain but not in the melanoma cells.

The protein resides in the cell membrane. Functionally, receptor for MSH (alpha, beta and gamma) and ACTH. The activity of this receptor is mediated by G proteins which activate adenylate cyclase. This receptor is a possible mediator of the immunomodulation properties of melanocortins. This chain is Melanocortin receptor 5 (MC5R), found in Homo sapiens (Human).